The chain runs to 386 residues: MAEEEKMRRQLVLAKPFSLEDEKDSELTASSVIRKILSLIKTVRPGSDLTNFQLPPQLILPRSRLQCYGEMIYSFGGQDLLGECSRRNIPIERLKSVVTWNISTLRPVVVGMSPYNPILGETHHVSNGYINVLTEQVMHHPPVSALHATHEQENIDVTWCQYFTPKFRGAYVDVEVNGKRIMKLLHHKETYEMDQPRLIMKFLPAPGAHWAGKVKIKCPETDLEAELHLISDSFIERFRGNNNRSIKGKIFESSSGNQLYNIFGHWDRTVMAKNLKTGGLEVIYNANENITGLKPPTVKNLQEVMESESTIVWSEVSEGILKKDWERAREAKILVEEKQREALKQREASGESWVPKHFSVVKDGKDWHCSPLQPTVPRAPLVITEK.

Belongs to the OSBP family. As to expression, expressed in roots, stems and flowers.

May be involved in the transport of sterols. The sequence is that of Oxysterol-binding protein-related protein 4A (ORP4A) from Arabidopsis thaliana (Mouse-ear cress).